The sequence spans 779 residues: Tricorn protease-interacting factor F3 (779 aa).

Substrate contacts are provided by residues Glu102 and 231 to 235 (GAMEN). Residue His266 participates in Zn(2+) binding. The active-site Proton acceptor is the Glu267. 2 residues coordinate Zn(2+): His270 and Glu289.

It belongs to the peptidase M1 family. Part of the tricorn proteolytic complex. Zn(2+) is required as a cofactor.

It localises to the cytoplasm. Functionally, proteases F1, F2 and F3 degrade oligopeptides produced by Tricorn (themselves probably produced by the proteasome), yielding free amino acids. The protein is Tricorn protease-interacting factor F3 (trf3) of Thermoplasma volcanium (strain ATCC 51530 / DSM 4299 / JCM 9571 / NBRC 15438 / GSS1).